Here is a 119-residue protein sequence, read N- to C-terminus: Beta-2-microglobulin (119 aa).

The signal sequence occupies residues 1 to 20 (MARFVVVALLVLLSLSGLEA). In terms of domain architecture, Ig-like C1-type spans 25-114 (PKIQVYSRHP…VTLSTPKTVK (90 aa)). Cys45 and Cys100 are joined by a disulfide.

This sequence belongs to the beta-2-microglobulin family. In terms of assembly, heterodimer of an alpha chain and a beta chain. Beta-2-microglobulin is the beta-chain of major histocompatibility complex class I molecules.

Its subcellular location is the secreted. In terms of biological role, component of the class I major histocompatibility complex (MHC). Involved in the presentation of peptide antigens to the immune system. This is Beta-2-microglobulin (B2M) from Aotus lemurinus (Gray-bellied night monkey).